Consider the following 196-residue polypeptide: Peptidyl-tRNA hydrolase (196 aa).

Position 15 (histidine 15) interacts with tRNA. Catalysis depends on histidine 20, which acts as the Proton acceptor. Tyrosine 66, asparagine 68, and asparagine 114 together coordinate tRNA.

Belongs to the PTH family. In terms of assembly, monomer.

The protein localises to the cytoplasm. It carries out the reaction an N-acyl-L-alpha-aminoacyl-tRNA + H2O = an N-acyl-L-amino acid + a tRNA + H(+). Functionally, hydrolyzes ribosome-free peptidyl-tRNAs (with 1 or more amino acids incorporated), which drop off the ribosome during protein synthesis, or as a result of ribosome stalling. Its function is as follows. Catalyzes the release of premature peptidyl moieties from peptidyl-tRNA molecules trapped in stalled 50S ribosomal subunits, and thus maintains levels of free tRNAs and 50S ribosomes. The chain is Peptidyl-tRNA hydrolase from Polynucleobacter asymbioticus (strain DSM 18221 / CIP 109841 / QLW-P1DMWA-1) (Polynucleobacter necessarius subsp. asymbioticus).